Reading from the N-terminus, the 492-residue chain is Probable Xaa-Pro aminopeptidase AO090005001240 (492 aa).

Asp272, Asp283, Glu420, and Glu459 together coordinate Mn(2+).

This sequence belongs to the peptidase M24B family. Mn(2+) is required as a cofactor.

The enzyme catalyses Release of any N-terminal amino acid, including proline, that is linked to proline, even from a dipeptide or tripeptide.. Functionally, catalyzes the removal of a penultimate prolyl residue from the N-termini of peptides. In Aspergillus oryzae (strain ATCC 42149 / RIB 40) (Yellow koji mold), this protein is Probable Xaa-Pro aminopeptidase AO090005001240.